Reading from the N-terminus, the 37-residue chain is Large ribosomal subunit protein bL36c (37 aa).

It belongs to the bacterial ribosomal protein bL36 family.

It is found in the plastid. Its subcellular location is the chloroplast. The sequence is that of Large ribosomal subunit protein bL36c from Lolium perenne (Perennial ryegrass).